Reading from the N-terminus, the 44-residue chain is Mu-conotoxin-like Cal 12.1.2h (44 aa).

Disulfide bonds link C3–C16, C11–C28, C18–C33, and C27–C38. 6'-bromotryptophan is present on W17. P23 is modified (4-hydroxyproline). Residues W36 and W37 each carry the 6'-bromotryptophan modification. 4-hydroxyproline is present on P39. W43 carries the 6'-bromotryptophan modification.

As to expression, expressed by the venom duct.

The protein localises to the secreted. Mu-conotoxins block voltage-gated sodium channels. This toxin reversibly blocks voltage-gated sodium channel in cephalopods, with no alteration in the voltage dependence of sodium conductance or on the kinetics of inactivation. This Californiconus californicus (California cone) protein is Mu-conotoxin-like Cal 12.1.2h.